Here is a 243-residue protein sequence, read N- to C-terminus: Adenosylcobinamide-GDP ribazoletransferase (243 aa).

6 helical membrane passes run Phe-33 to Pro-53, Ile-59 to Gly-79, Ile-105 to Tyr-125, Thr-127 to Ala-147, Val-172 to Ile-192, and Thr-223 to Ile-243.

Belongs to the CobS family. It depends on Mg(2+) as a cofactor.

It is found in the cell membrane. The enzyme catalyses alpha-ribazole + adenosylcob(III)inamide-GDP = adenosylcob(III)alamin + GMP + H(+). It catalyses the reaction alpha-ribazole 5'-phosphate + adenosylcob(III)inamide-GDP = adenosylcob(III)alamin 5'-phosphate + GMP + H(+). The protein operates within cofactor biosynthesis; adenosylcobalamin biosynthesis; adenosylcobalamin from cob(II)yrinate a,c-diamide: step 7/7. Functionally, joins adenosylcobinamide-GDP and alpha-ribazole to generate adenosylcobalamin (Ado-cobalamin). Also synthesizes adenosylcobalamin 5'-phosphate from adenosylcobinamide-GDP and alpha-ribazole 5'-phosphate. The chain is Adenosylcobinamide-GDP ribazoletransferase from Alkaliphilus oremlandii (strain OhILAs) (Clostridium oremlandii (strain OhILAs)).